Consider the following 553-residue polypeptide: Putative transport protein YidE (553 aa).

The next 5 membrane-spanning stretches (helical) occupy residues 4–24 (IALTVSILALVAVVGLFIGNV), 28–48 (GIGLGIGGVLFGGIIVGHFVS), 65–85 (FGLILFVYTIGIQVGPGFFAS), 95–115 (LFAVLIVIIGGLVTAILHKLF), and 158–178 (MSYAMAYPFGICGILFTMWML). RCK C-terminal domains follow at residues 191–276 (QQHE…VIGQ) and 279–361 (DTSL…VLGN). A run of 6 helical transmembrane segments spans residues 371–391 (MLPVFIGIGLGVLLGSIPVFV), 393–413 (GFPAALKLGLAGGPLIMALIL), 439–459 (IVLFLSIVGLKSGGDFVNTLV), 464–484 (LSWIGYGALITAVPLITVGIL), 493–513 (YLTMCGMLAGSMTDPPALAFA), and 533–553 (LVMFLRIITPQLLAVLFWSIG).

The protein belongs to the AAE transporter (TC 2.A.81) family. YidE subfamily.

Its subcellular location is the cell membrane. The protein is Putative transport protein YidE of Shigella flexneri serotype 5b (strain 8401).